Here is a 960-residue protein sequence, read N- to C-terminus: Cyclin-dependent kinase-like 5 (960 aa).

Positions phenylalanine 13–phenylalanine 297 constitute a Protein kinase domain. Residues valine 19–valine 27 and lysine 42 each bind ATP. Aspartate 135 (proton acceptor) is an active-site residue. Disordered stretches follow at residues glutamine 300 to leucine 349, lysine 382 to lysine 566, serine 646 to glutamine 834, and alanine 848 to leucine 960. Polar residues-rich tracts occupy residues glutamate 319–glutamine 336 and lysine 382–isoleucine 402. Residue serine 407 is modified to Phosphoserine. The segment covering serine 407 to phenylalanine 417 has biased composition (basic and acidic residues). Polar residues-rich tracts occupy residues leucine 434–glutamate 462, isoleucine 473–tyrosine 482, and glutamate 510–asparagine 548. A Phosphoserine modification is found at serine 479. Composition is skewed to basic and acidic residues over residues asparagine 549–arginine 559 and glutamine 679–tyrosine 704. Residue serine 720 is modified to Phosphoserine. A compositionally biased stretch (polar residues) spans histidine 728 to asparagine 748. Serine 761 is subject to Phosphoserine. Residues glutamate 769–glycine 778 show a composition bias toward basic and acidic residues. Residues glutamine 791–serine 816 are compositionally biased toward polar residues. Residues arginine 817–serine 827 show a composition bias toward basic and acidic residues. Polar residues-rich tracts occupy residues leucine 862 to serine 872, serine 880 to arginine 890, and serine 914 to glutamate 928.

This sequence belongs to the protein kinase superfamily. CMGC Ser/Thr protein kinase family. CDC2/CDKX subfamily. In terms of assembly, interacts with MECP2. In terms of processing, autophosphorylated. As to expression, expressed in brain, lung, kidney, prostate, ovary, placenta, pancreas and testis. Predominant transcript in brain.

The protein localises to the nucleus. It is found in the cytoplasm. It localises to the cytoskeleton. The protein resides in the cilium basal body. Its subcellular location is the microtubule organizing center. The protein localises to the centrosome. It catalyses the reaction L-seryl-[protein] + ATP = O-phospho-L-seryl-[protein] + ADP + H(+). The catalysed reaction is L-threonyl-[protein] + ATP = O-phospho-L-threonyl-[protein] + ADP + H(+). In terms of biological role, mediates phosphorylation of MECP2. May regulate ciliogenesis. The sequence is that of Cyclin-dependent kinase-like 5 from Homo sapiens (Human).